The sequence spans 558 residues: FRIGIDA-like protein 3 (558 aa).

Positions 9–102 (SLMDSTSSKI…ALERLQKKRD (94 aa)) form a coiled coil. Residues 454 to 463 (AKADKKRATE) are compositionally biased toward basic and acidic residues. The interval 454 to 494 (AKADKKRATEPMKPQPKRPRGAQPRVTDNNNNINNNKTGYG) is disordered.

It belongs to the Frigida family.

The protein is FRIGIDA-like protein 3 (FRL3) of Arabidopsis thaliana (Mouse-ear cress).